The primary structure comprises 368 residues: UDP-N-acetylglucosamine--N-acetylmuramyl-(pentapeptide) pyrophosphoryl-undecaprenol N-acetylglucosamine transferase (368 aa).

UDP-N-acetyl-alpha-D-glucosamine is bound by residues 10-12 (TGG), asparagine 126, serine 200, isoleucine 255, and glutamine 300.

This sequence belongs to the glycosyltransferase 28 family. MurG subfamily.

It is found in the cell membrane. It carries out the reaction Mur2Ac(oyl-L-Ala-gamma-D-Glu-L-Lys-D-Ala-D-Ala)-di-trans,octa-cis-undecaprenyl diphosphate + UDP-N-acetyl-alpha-D-glucosamine = beta-D-GlcNAc-(1-&gt;4)-Mur2Ac(oyl-L-Ala-gamma-D-Glu-L-Lys-D-Ala-D-Ala)-di-trans,octa-cis-undecaprenyl diphosphate + UDP + H(+). It functions in the pathway cell wall biogenesis; peptidoglycan biosynthesis. Its function is as follows. Cell wall formation. Catalyzes the transfer of a GlcNAc subunit on undecaprenyl-pyrophosphoryl-MurNAc-pentapeptide (lipid intermediate I) to form undecaprenyl-pyrophosphoryl-MurNAc-(pentapeptide)GlcNAc (lipid intermediate II). The polypeptide is UDP-N-acetylglucosamine--N-acetylmuramyl-(pentapeptide) pyrophosphoryl-undecaprenol N-acetylglucosamine transferase (Lactobacillus helveticus (strain DPC 4571)).